We begin with the raw amino-acid sequence, 100 residues long: Urease subunit gamma (100 aa).

Belongs to the urease gamma subunit family. In terms of assembly, heterotrimer of UreA (gamma), UreB (beta) and UreC (alpha) subunits. Three heterotrimers associate to form the active enzyme.

The protein resides in the cytoplasm. It catalyses the reaction urea + 2 H2O + H(+) = hydrogencarbonate + 2 NH4(+). Its pathway is nitrogen metabolism; urea degradation; CO(2) and NH(3) from urea (urease route): step 1/1. The polypeptide is Urease subunit gamma (Tolumonas auensis (strain DSM 9187 / NBRC 110442 / TA 4)).